We begin with the raw amino-acid sequence, 341 residues long: 4-hydroxy-2-oxovalerate aldolase (341 aa).

The Pyruvate carboxyltransferase domain occupies 9 to 259 (VRITEVCLRD…KLDIDLYKMM (251 aa)). 17–18 (RD) is a binding site for substrate. Aspartate 18 lines the Mn(2+) pocket. Catalysis depends on histidine 21, which acts as the Proton acceptor. Substrate-binding residues include serine 171 and histidine 198. Positions 198 and 200 each coordinate Mn(2+). Tyrosine 289 lines the substrate pocket.

The protein belongs to the 4-hydroxy-2-oxovalerate aldolase family.

It carries out the reaction (S)-4-hydroxy-2-oxopentanoate = acetaldehyde + pyruvate. The sequence is that of 4-hydroxy-2-oxovalerate aldolase from Bacillus cereus (strain ATCC 10987 / NRS 248).